We begin with the raw amino-acid sequence, 108 residues long: UPF0060 membrane protein Sputw3181_1172 (108 aa).

The next 4 membrane-spanning stretches (helical) occupy residues 3 to 23 (VITT…GCYL), 31 to 51 (GASA…AWLL), 63 to 83 (AAYG…VDGI), and 87 to 107 (RWDL…MFAP).

The protein belongs to the UPF0060 family.

Its subcellular location is the cell inner membrane. The sequence is that of UPF0060 membrane protein Sputw3181_1172 from Shewanella sp. (strain W3-18-1).